The chain runs to 1465 residues: DNA polymerase III PolC-type (1465 aa).

Residues 427-583 enclose the Exonuclease domain; the sequence is YVVFDVETTG…YDAEATGRLL (157 aa).

Belongs to the DNA polymerase type-C family. PolC subfamily.

It localises to the cytoplasm. It catalyses the reaction DNA(n) + a 2'-deoxyribonucleoside 5'-triphosphate = DNA(n+1) + diphosphate. In terms of biological role, required for replicative DNA synthesis. This DNA polymerase also exhibits 3' to 5' exonuclease activity. The sequence is that of DNA polymerase III PolC-type from Streptococcus pyogenes serotype M5 (strain Manfredo).